A 383-amino-acid polypeptide reads, in one-letter code: ATP phosphoribosyltransferase regulatory subunit (383 aa).

The protein belongs to the class-II aminoacyl-tRNA synthetase family. HisZ subfamily. In terms of assembly, heteromultimer composed of HisG and HisZ subunits.

The protein localises to the cytoplasm. It functions in the pathway amino-acid biosynthesis; L-histidine biosynthesis; L-histidine from 5-phospho-alpha-D-ribose 1-diphosphate: step 1/9. Its function is as follows. Required for the first step of histidine biosynthesis. May allow the feedback regulation of ATP phosphoribosyltransferase activity by histidine. This chain is ATP phosphoribosyltransferase regulatory subunit, found in Janthinobacterium sp. (strain Marseille) (Minibacterium massiliensis).